We begin with the raw amino-acid sequence, 315 residues long: Olfactory receptor 5A1 (315 aa).

Over 1–28 the chain is Extracellular; it reads MSITKAWNSSSVTMFILLGFTDHPELQA. The N-linked (GlcNAc...) asparagine glycan is linked to N8. Residues 29-52 traverse the membrane as a helical segment; it reads LLFVTFLGIYLTTLAWNLALIFLI. At 53 to 60 the chain is on the cytoplasmic side; that stretch reads RGDTHLHT. A helical membrane pass occupies residues 61–82; that stretch reads PMYFFLSNLSFIDICYSSAVAP. The Extracellular segment spans residues 83–103; the sequence is NMLTDFFWEQKTISFVGCAAQ. C100 and C192 are oxidised to a cystine. Residues 104-123 traverse the membrane as a helical segment; it reads FFFFVGMGLSECLLLTAMAY. Residues 124 to 142 are Cytoplasmic-facing; it reads DRYAAISSPLLYPTIMTQG. A helical transmembrane segment spans residues 143-161; sequence LCTRMVVGAYVGGFLSSLI. Topologically, residues 162–198 are extracellular; sequence QASSIFRLHFCGPNIINHFFCDLPPVLALSCSDTFLS. A helical transmembrane segment spans residues 199–222; it reads QVVNFLVVVTVGGTSFLQLLISYG. The Cytoplasmic segment spans residues 223–239; sequence YIVSAVLKIPSAEGRWK. Residues 240–262 form a helical membrane-spanning segment; it reads ACNTCASHLMVVTLLFGTALFVY. At 263 to 275 the chain is on the extracellular side; it reads LRPSSSYLLGRDK. A helical transmembrane segment spans residues 276–295; the sequence is VVSVFYSLVIPMLNPLIYSL. Topologically, residues 296–315 are cytoplasmic; it reads RNKEIKDALWKVLERKKVFS.

It belongs to the G-protein coupled receptor 1 family.

The protein localises to the cell membrane. In terms of biological role, odorant receptor. This is Olfactory receptor 5A1 (OR5A1) from Homo sapiens (Human).